A 155-amino-acid polypeptide reads, in one-letter code: Small ribosomal subunit protein uS7c (155 aa).

The protein belongs to the universal ribosomal protein uS7 family. In terms of assembly, part of the 30S ribosomal subunit.

The protein resides in the plastid. Its subcellular location is the chloroplast. One of the primary rRNA binding proteins, it binds directly to 16S rRNA where it nucleates assembly of the head domain of the 30S subunit. In Metasequoia glyptostroboides (Dawn redwood), this protein is Small ribosomal subunit protein uS7c (rps7).